Reading from the N-terminus, the 496-residue chain is MESVTRHRADMISFFTFDSYISIVGVAYTAVGLLGVFCNVTTVIMILTNRVFRLSAYTIMANVALADSIVMLIAGVACGMDVMWPNPNDLTSFIPSLEEPYQKIAPVSLRNDSKTDSSAAGFETGNIHAVLSFSFVAAWTAGVISYAMLGTNRCIAICYYGTKARALNQVSVAVACSASTWIVGIAAALVGTLSQPMIGIQRTMWSISFLEPRPHTTLFFTLLCAANLLGLGAQWVCSTLVLLKIRQVKKKISKNKLNQNSANRFRKQVILALNEIIVTGNFKARLTFQFFYPSILCTISTFLFFIKPYAFEYLSGWQLVILHLLWLCNHTCNPFIYAYFNDRMRLTYKEILTCAAIRYQIRKRRSSHPFRMHGRHNVSKRSNAAGMKSTRISARSGRTNRDGNFVRNSLQMQSRDFEQLCEFIMRVNPLYDSSEGWRESSDDEPFQPEFTKELESAHNQGGSSRFDSEREAKSIVLDLGRQTVEHWVKFAKKASI.

At 1 to 19 (MESVTRHRADMISFFTFDS) the chain is on the extracellular side. A helical transmembrane segment spans residues 20–40 (YISIVGVAYTAVGLLGVFCNV). Topologically, residues 41 to 58 (TTVIMILTNRVFRLSAYT) are cytoplasmic. A helical transmembrane segment spans residues 59 to 79 (IMANVALADSIVMLIAGVACG). Residues 80–128 (MDVMWPNPNDLTSFIPSLEEPYQKIAPVSLRNDSKTDSSAAGFETGNIH) lie on the Extracellular side of the membrane. A glycan (N-linked (GlcNAc...) asparagine) is linked at Asn111. A helical transmembrane segment spans residues 129–149 (AVLSFSFVAAWTAGVISYAML). Residues 150–169 (GTNRCIAICYYGTKARALNQ) lie on the Cytoplasmic side of the membrane. A helical transmembrane segment spans residues 170 to 190 (VSVAVACSASTWIVGIAAALV). The Extracellular segment spans residues 191 to 216 (GTLSQPMIGIQRTMWSISFLEPRPHT). Residues 217-237 (TLFFTLLCAANLLGLGAQWVC) form a helical membrane-spanning segment. At 238-285 (STLVLLKIRQVKKKISKNKLNQNSANRFRKQVILALNEIIVTGNFKAR) the chain is on the cytoplasmic side. The helical transmembrane segment at 286-306 (LTFQFFYPSILCTISTFLFFI) threads the bilayer. The Extracellular portion of the chain corresponds to 307-318 (KPYAFEYLSGWQ). A helical transmembrane segment spans residues 319–339 (LVILHLLWLCNHTCNPFIYAY). Residues 340–496 (FNDRMRLTYK…WVKFAKKASI (157 aa)) are Cytoplasmic-facing. A disordered region spans residues 451–470 (TKELESAHNQGGSSRFDSER).

It belongs to the G-protein coupled receptor 1 family.

It is found in the cell membrane. The protein is Probable G-protein coupled receptor K01A12.3 of Caenorhabditis elegans.